The sequence spans 457 residues: Siroheme synthase (457 aa).

The precorrin-2 dehydrogenase /sirohydrochlorin ferrochelatase stretch occupies residues 1–204 (MDHLPIFCQL…NDQKAITETT (204 aa)). NAD(+)-binding positions include 22 to 23 (DV) and 43 to 44 (LA). Serine 128 is subject to Phosphoserine. The interval 216-457 (GEVVLVGAGP…RDKLNWFSNH (242 aa)) is uroporphyrinogen-III C-methyltransferase. Proline 225 is an S-adenosyl-L-methionine binding site. Aspartate 248 serves as the catalytic Proton acceptor. Lysine 270 acts as the Proton donor in catalysis. S-adenosyl-L-methionine is bound by residues 301–303 (GGD), isoleucine 306, 331–332 (TA), methionine 382, and glycine 411.

The protein in the N-terminal section; belongs to the precorrin-2 dehydrogenase / sirohydrochlorin ferrochelatase family. This sequence in the C-terminal section; belongs to the precorrin methyltransferase family.

It carries out the reaction uroporphyrinogen III + 2 S-adenosyl-L-methionine = precorrin-2 + 2 S-adenosyl-L-homocysteine + H(+). It catalyses the reaction precorrin-2 + NAD(+) = sirohydrochlorin + NADH + 2 H(+). The catalysed reaction is siroheme + 2 H(+) = sirohydrochlorin + Fe(2+). It participates in cofactor biosynthesis; adenosylcobalamin biosynthesis; precorrin-2 from uroporphyrinogen III: step 1/1. Its pathway is cofactor biosynthesis; adenosylcobalamin biosynthesis; sirohydrochlorin from precorrin-2: step 1/1. The protein operates within porphyrin-containing compound metabolism; siroheme biosynthesis; precorrin-2 from uroporphyrinogen III: step 1/1. It functions in the pathway porphyrin-containing compound metabolism; siroheme biosynthesis; siroheme from sirohydrochlorin: step 1/1. It participates in porphyrin-containing compound metabolism; siroheme biosynthesis; sirohydrochlorin from precorrin-2: step 1/1. Functionally, multifunctional enzyme that catalyzes the SAM-dependent methylations of uroporphyrinogen III at position C-2 and C-7 to form precorrin-2 via precorrin-1. Then it catalyzes the NAD-dependent ring dehydrogenation of precorrin-2 to yield sirohydrochlorin. Finally, it catalyzes the ferrochelation of sirohydrochlorin to yield siroheme. The protein is Siroheme synthase of Escherichia coli O7:K1 (strain IAI39 / ExPEC).